The following is a 642-amino-acid chain: Threonine--tRNA ligase (642 aa).

The TGS domain maps to 1–61; that stretch reads MPVITITNGL…MQDSKLDIIT (61 aa). Residues 243 to 534 are catalytic; it reads DHRKIGQQLD…LIEEYAGFFP (292 aa). The Zn(2+) site is built by Cys334, His385, and His511.

The protein belongs to the class-II aminoacyl-tRNA synthetase family. Homodimer. Requires Zn(2+) as cofactor.

It is found in the cytoplasm. It catalyses the reaction tRNA(Thr) + L-threonine + ATP = L-threonyl-tRNA(Thr) + AMP + diphosphate + H(+). Catalyzes the attachment of threonine to tRNA(Thr) in a two-step reaction: L-threonine is first activated by ATP to form Thr-AMP and then transferred to the acceptor end of tRNA(Thr). Also edits incorrectly charged L-seryl-tRNA(Thr). The protein is Threonine--tRNA ligase of Baumannia cicadellinicola subsp. Homalodisca coagulata.